Reading from the N-terminus, the 1099-residue chain is Adenylate cyclase type 7 (1099 aa).

Over 1–33 the chain is Cytoplasmic; that stretch reads MPAKGRYFLNEGDEGPDQAALYEKYRLTSLHGP. 6 helical membrane passes run 34 to 54, 63 to 83, 95 to 117, 122 to 142, 147 to 167, and 178 to 198; these read LLLL…SIAF, QVVL…YVLV, ALAL…DSLE, AWEQ…LLPL, AIVA…AVTR, and LGLQ…TGAF. Topologically, residues 199 to 595 are cytoplasmic; sequence HKHQLQDASR…YRLVPIPRAR (397 aa). Positions 286, 287, and 330 each coordinate Mg(2+). ATP contacts are provided by residues 286–291, 328–330, and R374; these read DIVGFT and LGD. Positions 456–476 are disordered; sequence DPRSQQPPPPSHHLSKPKGDA. A mediates regulation of adenylate cyclase activity by C5 alpha-induced G- beta and gamma pathway region spans residues 479–484; it reads KMRASV. Positions 493-501 are mediates regulation of adenylate cyclase activity by sphingosine 1-phosphate-induced G alpha 13 pathway; it reads WGAARPFAH. The segment at 504-543 is disordered; it reads HRESVSSSETPISNGRRQKAIPLRRHRAPDRSASPKGRLE. Over residues 508-518 the composition is skewed to polar residues; that stretch reads VSSSETPISNG. The segment at 508 to 585 is modulates adenylate cyclase activity by modulating the binding of G(s)alpha to the high-affinity G(s)alpha binding site in 7C1a/7C2; the sequence is VSSSETPISN…IFLEKGFERE (78 aa). Over residues 519–531 the composition is skewed to basic residues; that stretch reads RRQKAIPLRRHRA. 3 consecutive transmembrane segments (helical) span residues 596–616, 621–641, and 670–689; these read YDFA…LLVM, TLGV…SFCF, and LVLV…INMP. A glycan (N-linked (GlcNAc...) asparagine) is linked at N702. 3 consecutive transmembrane segments (helical) span residues 719-738, 747-766, and 813-833; these read LLPY…SVFL, MLLT…SPCW, and DLKI…ILLS. Over 834 to 1099 the chain is Cytoplasmic; the sequence is RQIDYYCRLD…TAKFQGLGLN (266 aa). ATP-binding positions include K950, 1029-1031, 1036-1040, and K1076; these read DIW and NVASR.

It belongs to the adenylyl cyclase class-4/guanylyl cyclase family. The cofactor is Mg(2+). It depends on Mn(2+) as a cofactor. Phosphorylated by PRKCD. As to expression, most abundant in heart, spleen and lung.

It is found in the membrane. It carries out the reaction ATP = 3',5'-cyclic AMP + diphosphate. Activated by the G protein alpha subunit. Activated by the G protein beta and gamma subunit complex. Activated by GNA13 and GNA12. Ethanol and phorbol 12,13-dibutanoate significantly potentiate adenylate cyclase activity generated in response to the activation of the prostanoid receptor by the agonist prostaglandin E1(1-) in a PKC-dependent manner. Inhibited by lithium. Catalyzes the formation of cAMP in response to activation of G protein-coupled receptors. Functions in signaling cascades activated namely by thrombin and sphingosine 1-phosphate and mediates regulation of cAMP synthesis through synergistic action of the stimulatory G alpha protein with GNA13. Also, during inflammation, mediates zymosan-induced increase intracellular cAMP, leading to protein kinase A pathway activation in order to modulate innate immune responses through heterotrimeric G proteins G(12/13). Functions in signaling cascades activated namely by dopamine and C5 alpha chain and mediates regulation of cAMP synthesis through synergistic action of the stimulatory G protein with G beta:gamma complex. Functions, through cAMP response regulation, to keep inflammation under control during bacterial infection by sensing the presence of serum factors, such as the bioactive lysophospholipid (LPA) that regulate LPS-induced TNF-alpha production. However, it is also required for the optimal functions of B and T cells during adaptive immune responses by regulating cAMP synthesis in both B and T cells. This Mus musculus (Mouse) protein is Adenylate cyclase type 7.